The chain runs to 227 residues: C4-dicarboxylate TRAP transporter small permease protein DctQ (227 aa).

Residues 1–7 (MLRILDR) lie on the Cytoplasmic side of the membrane. The chain crosses the membrane as a helical span at residues 8 to 28 (AEEVLIAALIATATVLIFVSV). Topologically, residues 29–67 (THRFTLGFVADFVGFFRGHGMTGAAAAAKSLYTTLRGIN) are periplasmic. Residues 68–88 (LVWAQELCIILFVWMAKFGAA) traverse the membrane as a helical segment. At 89-112 (YGVRTGIHVGIDVLINRLDAPKRR) the chain is on the cytoplasmic side. A helical membrane pass occupies residues 113–133 (FFILLGLGAGALFTGIIATLG). Residues 134-149 (ANFVLHMYHASSTSPD) lie on the Periplasmic side of the membrane. Residues 150–170 (LELPMWLVYLAIPMGSSLMCF) traverse the membrane as a helical segment. Over 171–227 (RFLQVAFGFARTGELPHHDHGHVDGVDTENEGIDAEGDVLLHSPLTPRDLVEKPKDN) the chain is Cytoplasmic.

The protein belongs to the TRAP transporter small permease family. The complex comprises the extracytoplasmic solute receptor protein DctP, and the two transmembrane proteins DctQ and DctM.

Its subcellular location is the cell inner membrane. Functionally, part of the tripartite ATP-independent periplasmic (TRAP) transport system DctPQM involved in C4-dicarboxylates uptake. The sequence is that of C4-dicarboxylate TRAP transporter small permease protein DctQ from Rhodobacter capsulatus (Rhodopseudomonas capsulata).